A 605-amino-acid chain; its full sequence is Sulfite reductase [NADPH] flavoprotein alpha-component (605 aa).

The Flavodoxin-like domain occupies 70-208; it reads LTIIYASQTG…PAAEWRVKAL (139 aa). Residues 76–81, 123–126, and 159–168 each bind FMN; these read SQTGNA, STHG, and LGDSSYEFFC. In terms of domain architecture, FAD-binding FR-type spans 240–454; it reads QNPYEATLLT…VEENNNFKLP (215 aa). FAD-binding positions include threonine 328, glycine 362, 392–395, 410–412, and 425–428; these read RLYS, TVG, and GGAS. Residues 525-526, 531-535, and aspartate 567 contribute to the NADP(+) site; these read SR and KVYVQ. Tyrosine 605 provides a ligand contact to FAD.

It belongs to the NADPH-dependent sulphite reductase flavoprotein subunit CysJ family. This sequence in the N-terminal section; belongs to the flavodoxin family. The protein in the C-terminal section; belongs to the flavoprotein pyridine nucleotide cytochrome reductase family. In terms of assembly, alpha(8)-beta(8). The alpha component is a flavoprotein, the beta component is a hemoprotein. FAD serves as cofactor. FMN is required as a cofactor.

The catalysed reaction is hydrogen sulfide + 3 NADP(+) + 3 H2O = sulfite + 3 NADPH + 4 H(+). It participates in sulfur metabolism; hydrogen sulfide biosynthesis; hydrogen sulfide from sulfite (NADPH route): step 1/1. Component of the sulfite reductase complex that catalyzes the 6-electron reduction of sulfite to sulfide. This is one of several activities required for the biosynthesis of L-cysteine from sulfate. The flavoprotein component catalyzes the electron flow from NADPH -&gt; FAD -&gt; FMN to the hemoprotein component. This is Sulfite reductase [NADPH] flavoprotein alpha-component from Photobacterium profundum (strain SS9).